The chain runs to 377 residues: Formate dehydrogenase, mitochondrial (377 aa).

The transit peptide at 1–29 (MAAMWRAAARQLVDRAVGSRAAHTSAGSK) directs the protein to the mitochondrion. Positions 121 and 145 each coordinate substrate. Residues T146, D220, 255–259 (PLTEK), N281, D307, and 331–334 (HISG) each bind NAD(+).

This sequence belongs to the D-isomer specific 2-hydroxyacid dehydrogenase family. FDH subfamily. Homodimer.

It is found in the mitochondrion. It catalyses the reaction formate + NAD(+) = CO2 + NADH. Functionally, catalyzes the NAD(+)-dependent oxidation of formate to carbon dioxide. Involved in the cell stress response. The protein is Formate dehydrogenase, mitochondrial of Hordeum vulgare (Barley).